Here is a 474-residue protein sequence, read N- to C-terminus: MYAEERAYGSFDDVMEVYQQIVTESIQLKRLHFGSGCLIEFLGDSGTCETFCGGWISMICWTSDTNSMGSLTVDIGIDDGKYKTYNARGFLLCSKSITSISQNTEGRDRILTVSQENNKLQITFVTLTKVFKEHDIRNLGDPKCIEKFEKECRALDRKKHDDEHRKRSGKQKEKRKVEDTDKKKDDDRRKQEERKRNDEDKQPDKKEESDELPKEKRQKYHDMKRNLEEQSHEDGITLTSTTLVNGAVEGALPPCISIDNHEDQQHDELDKRAYAQGTNREGLSNEDNYGNFRLNKSLEQLRAKLVASSGDIVERSLLKLKECLDNVKDNLIKNECADVTGPSKCLSKTKHIEPKKQIVFSDCVRPVPVCEIKPFIDVRLFETARSPRRLRQRTRTIVGSTDGAIEQQRVISGQNRGRARGRGRGRAPRRRNSNINNSRTQTTIVIDDSSEAENFENEGSFNEDLLATTILETL.

2 stretches are compositionally biased toward basic and acidic residues: residues 156 to 165 (DRKKHDDEHR) and 175 to 219 (RKVE…KRQK). Disordered stretches follow at residues 156 to 219 (DRKK…KRQK) and 412 to 441 (SGQN…SRTQ). Positions 417–432 (GRARGRGRGRAPRRRN) are enriched in basic residues.

It belongs to the herpesviridae U79/UL112 family.

It localises to the host nucleus. Functionally, may be involved in DNA replication. This Homo sapiens (Human) protein is Protein U79/U80 (U79/U80).